Here is a 457-residue protein sequence, read N- to C-terminus: Zinc finger protein ZPR1 (457 aa).

Polar residues predominate over residues 1-13; sequence MSTVSDPNSSNPP. The segment at 1-21 is disordered; sequence MSTVSDPNSSNPPESAGNIRP. 2 consecutive C4-type zinc fingers follow at residues 43–75 and 261–293; these read CMNC…CDHC and CPSC…CGAC. Residues 414 to 457 are disordered; the sequence is VQSLSDDDSEPDDKLTVERYDRSYEDNEDLGLNDMKTEGYEEKA. Composition is skewed to basic and acidic residues over residues 425-438 and 448-457; these read DDKL…RSYE and MKTEGYEEKA.

Belongs to the ZPR1 family.

Its function is as follows. Might mediate EGFR and FGFR signal transduction cascades required for lumen formation in tracheal cells. This chain is Zinc finger protein ZPR1, found in Drosophila melanogaster (Fruit fly).